A 524-amino-acid chain; its full sequence is Putative ATP-dependent RNA helicase R458 (524 aa).

The Helicase ATP-binding domain occupies 125–338; that stretch reads VPELIQRKDT…NSYFRKYSPI (214 aa). An ATP-binding site is contributed by 138–145; sequence FKSGTGKT. Positions 268–271 match the DEFD box motif; the sequence is DEFD. The region spanning 373–524 is the Helicase C-terminal domain; it reads IILDLLKQCR…QLPGDLSTLL (152 aa).

It belongs to the DEAD box helicase family. eIF4A subfamily.

The catalysed reaction is ATP + H2O = ADP + phosphate + H(+). Functionally, putative ATP-dependent RNA helicase. The polypeptide is Putative ATP-dependent RNA helicase R458 (Acanthamoeba polyphaga mimivirus (APMV)).